We begin with the raw amino-acid sequence, 258 residues long: Hydroxyacylglutathione hydrolase (258 aa).

7 residues coordinate Zn(2+): H56, H58, D60, H61, H112, D132, and H170.

This sequence belongs to the metallo-beta-lactamase superfamily. Glyoxalase II family. As to quaternary structure, monomer. Zn(2+) is required as a cofactor.

It catalyses the reaction an S-(2-hydroxyacyl)glutathione + H2O = a 2-hydroxy carboxylate + glutathione + H(+). It participates in secondary metabolite metabolism; methylglyoxal degradation; (R)-lactate from methylglyoxal: step 2/2. In terms of biological role, thiolesterase that catalyzes the hydrolysis of S-D-lactoyl-glutathione to form glutathione and D-lactic acid. This is Hydroxyacylglutathione hydrolase from Pseudomonas aeruginosa (strain LESB58).